A 171-amino-acid chain; its full sequence is UPF0312 protein SE_0264 (171 aa).

The protein belongs to the UPF0312 family.

This Staphylococcus epidermidis (strain ATCC 12228 / FDA PCI 1200) protein is UPF0312 protein SE_0264.